Reading from the N-terminus, the 310-residue chain is Ribonuclease HIII (310 aa).

The RNase H type-2 domain maps to 91-307 (YNCIGSDEAG…REKAQNLVTK (217 aa)). The a divalent metal cation site is built by D97, E98, and D202.

It belongs to the RNase HII family. RnhC subfamily. Mn(2+) is required as a cofactor. Requires Mg(2+) as cofactor.

It is found in the cytoplasm. The enzyme catalyses Endonucleolytic cleavage to 5'-phosphomonoester.. Endonuclease that specifically degrades the RNA of RNA-DNA hybrids. The protein is Ribonuclease HIII of Staphylococcus haemolyticus (strain JCSC1435).